The primary structure comprises 261 residues: uncharacterized protein (261 aa).

The stretch at 16–147 (KQTSLVLQNL…QTNVNVLRSQ (132 aa)) forms a coiled coil.

It is found in the cytoplasm. This is an uncharacterized protein from Schizosaccharomyces pombe (strain 972 / ATCC 24843) (Fission yeast).